The sequence spans 245 residues: Dehydrogenase/reductase SDR family member 6 (245 aa).

Residues 16–18 (QGI), Asp-37, and Asp-58 contribute to the NAD(+) site. Arg-144 lines the substrate pocket. The active-site Proton acceptor is the Tyr-147. NAD(+) contacts are provided by residues Lys-151 and 180-184 (VDTPS). Substrate-binding residues include Arg-188 and Arg-205.

It belongs to the short-chain dehydrogenases/reductases (SDR) family. As to quaternary structure, homotetramer.

It is found in the cytoplasm. The catalysed reaction is cis-4-hydroxy-L-proline + NAD(+) = 4-oxo-L-proline + NADH + H(+). The enzyme catalyses (R)-3-hydroxybutanoate + NAD(+) = acetoacetate + NADH + H(+). Its pathway is amino-acid metabolism. The protein operates within siderophore biosynthesis. Its function is as follows. NAD(H)-dependent dehydrogenase/reductase with a preference for cyclic substrates. Catalyzes stereoselective conversion of 4-oxo-L-proline to cis-4-hydroxy-L-proline, likely a detoxification mechanism for ketoprolines. Mediates the formation of 2,5-dihydroxybenzoate (2,5-DHBA), a siderophore that chelates free cytoplasmic iron and associates with LCN2, thereby regulating iron transport and homeostasis while protecting cells against free radical-induced oxidative stress. The iron-siderophore complex is imported into mitochondria, providing an iron source for mitochondrial metabolic processes in particular heme synthesis. May act as a 3-hydroxybutyrate dehydrogenase. This chain is Dehydrogenase/reductase SDR family member 6 (BDH2), found in Bos taurus (Bovine).